The sequence spans 453 residues: MSEKEIWEKVLEIAQEKLSAVSYSTFLKDTELYTIKDGEAIVLSSIPFNANWLNQQYAEIIQAILFDVVGYEVKPHFITTEELANYSNNETATPKEATKPSTETTEDNHVLGREQFNAHNTFDTFVIGPGNRFPHAASLAVAEAPAKAYNPLFIYGGVGLGKTHLMHAIGHHVLDNNPDAKVIYTSSEKFTNEFIKSIRDNEGEAFRERYRNIDVLLIDDIQFIQNKVQTQEEFFYTFNELHQNNKQIVISSDRPPKEIAQLEDRLRSRFEWGLIVDITPPDYETRMAILQKKIEEEKLDIPPEALNYIANQIQSNIRELEGALTRLLAYSQLLGKPITTELTAEALKDIIQAPKSKKITIQDIQKIVGQYYNVRIEDFSAKKRTKSIAYPRQIAMYLSRELTDFSLPKIGEEFGGRDHTTVIHAHEKISKDLKEDPIFKQEVENLEKEIRNV.

A domain I, interacts with DnaA modulators region spans residues 1–71; that stretch reads MSEKEIWEKV…QAILFDVVGY (71 aa). Residues 71 to 114 form a domain II region; it reads YEVKPHFITTEELANYSNNETATPKEATKPSTETTEDNHVLGRE. A domain III, AAA+ region region spans residues 115-331; sequence QFNAHNTFDT…GALTRLLAYS (217 aa). ATP is bound by residues Gly159, Gly161, Lys162, and Thr163. A domain IV, binds dsDNA region spans residues 332 to 453; that stretch reads QLLGKPITTE…ENLEKEIRNV (122 aa).

It belongs to the DnaA family. As to quaternary structure, oligomerizes as a right-handed, spiral filament on DNA at oriC.

The protein resides in the cytoplasm. Functionally, plays an essential role in the initiation and regulation of chromosomal replication. ATP-DnaA binds to the origin of replication (oriC) to initiate formation of the DNA replication initiation complex once per cell cycle. Binds the DnaA box (a 9 base pair repeat at the origin) and separates the double-stranded (ds)DNA. Forms a right-handed helical filament on oriC DNA; dsDNA binds to the exterior of the filament while single-stranded (ss)DNA is stabiized in the filament's interior. The ATP-DnaA-oriC complex binds and stabilizes one strand of the AT-rich DNA unwinding element (DUE), permitting loading of DNA polymerase. After initiation quickly degrades to an ADP-DnaA complex that is not apt for DNA replication. Binds acidic phospholipids. The sequence is that of Chromosomal replication initiator protein DnaA from Staphylococcus aureus (strain MRSA252).